The sequence spans 231 residues: NADH-ubiquinone oxidoreductase chain 4 (231 aa).

Transmembrane regions (helical) follow at residues 1-21 (PIAG…YGII), 34-54 (LFLP…LTCL), 63-85 (IAYS…TPWG), 89-111 (AMAL…NTTY), 128-148 (ILPM…AIPP), and 156-176 (LLIM…LGLS).

This sequence belongs to the complex I subunit 4 family.

It localises to the mitochondrion membrane. The enzyme catalyses a ubiquinone + NADH + 5 H(+)(in) = a ubiquinol + NAD(+) + 4 H(+)(out). Its function is as follows. Core subunit of the mitochondrial membrane respiratory chain NADH dehydrogenase (Complex I) that is believed to belong to the minimal assembly required for catalysis. Complex I functions in the transfer of electrons from NADH to the respiratory chain. The immediate electron acceptor for the enzyme is believed to be ubiquinone. The chain is NADH-ubiquinone oxidoreductase chain 4 (MT-ND4) from Crotalus concolor (Midget faded rattlesnake).